Here is a 290-residue protein sequence, read N- to C-terminus: Type II restriction enzyme MjaIII (290 aa).

This sequence belongs to the DpnII type II restriction endonuclease family.

The enzyme catalyses Endonucleolytic cleavage of DNA to give specific double-stranded fragments with terminal 5'-phosphates.. A P subtype restriction enzyme that recognizes the double-stranded sequence 5'-GATC-3'; the cleavage site is unknown. The polypeptide is Type II restriction enzyme MjaIII (mjaIIIR) (Methanocaldococcus jannaschii (strain ATCC 43067 / DSM 2661 / JAL-1 / JCM 10045 / NBRC 100440) (Methanococcus jannaschii)).